Consider the following 313-residue polypeptide: Olfactory receptor 4M2 (313 aa).

Topologically, residues 1-25 (METANYTKVTEFVLTGLSQTPEVQL) are extracellular. The N-linked (GlcNAc...) asparagine glycan is linked to N5. The chain crosses the membrane as a helical span at residues 26–49 (VLFVIFLSFYLFILPGNILIICTI). At 50–57 (SLDPHLTS) the chain is on the cytoplasmic side. Residues 58–79 (PMYFLLANLAFLDIWYSSITAP) form a helical membrane-spanning segment. The Extracellular segment spans residues 80–100 (EMLIDFFVERKIISFDGCIAQ). The cysteines at positions 97 and 189 are disulfide-linked. A helical transmembrane segment spans residues 101 to 120 (LFFLHFAGASEMFLLTVMAF). Over 121–139 (DLYTAICRPLHYATIMNQR) the chain is Cytoplasmic. A helical transmembrane segment spans residues 140–158 (LCCILVALSWRGGFIHSII). At 159 to 195 (QVALIVRLPFCGPNELDSYFCDITQVVRIACANTFPE) the chain is on the extracellular side. A helical transmembrane segment spans residues 196 to 219 (ELVMICSSGLISVVCLIALLMSYA). At 220-237 (FLLALFKKLSGSGENTNR) the chain is on the cytoplasmic side. The chain crosses the membrane as a helical span at residues 238–260 (AMSTCYSHITIVVLMFGPSIYIY). At 261–271 (ARPFDSFSLDK) the chain is on the extracellular side. A helical transmembrane segment spans residues 272 to 291 (VVSVFNTLIFPLRNPIIYTL). At 292 to 313 (RNKEVKAAMRKLVTKYILCKEK) the chain is on the cytoplasmic side.

The protein belongs to the G-protein coupled receptor 1 family.

The protein localises to the cell membrane. Functionally, odorant receptor. The chain is Olfactory receptor 4M2 (OR4M2) from Homo sapiens (Human).